The chain runs to 190 residues: Ribonuclease HII (190 aa).

The RNase H type-2 domain occupies 3–190 (KLIAGVDEVG…KPVKALLEEK (188 aa)). A divalent metal cation-binding residues include aspartate 9, glutamate 10, and aspartate 101.

The protein belongs to the RNase HII family. Mn(2+) serves as cofactor. It depends on Mg(2+) as a cofactor.

The protein resides in the cytoplasm. It catalyses the reaction Endonucleolytic cleavage to 5'-phosphomonoester.. Functionally, endonuclease that specifically degrades the RNA of RNA-DNA hybrids. The protein is Ribonuclease HII of Alteromonas mediterranea (strain DSM 17117 / CIP 110805 / LMG 28347 / Deep ecotype).